We begin with the raw amino-acid sequence, 151 residues long: Large ribosomal subunit protein uL15 (151 aa).

A disordered region spans residues 1–60; sequence MAENNPLKIHNLRPAPGAKTAKTRVGRGEASKGKTAGRGTKGTKARYQVPERFEGGQMPL.

Belongs to the universal ribosomal protein uL15 family. In terms of assembly, part of the 50S ribosomal subunit.

In terms of biological role, binds to the 23S rRNA. The polypeptide is Large ribosomal subunit protein uL15 (Streptomyces coelicolor (strain ATCC BAA-471 / A3(2) / M145)).